We begin with the raw amino-acid sequence, 278 residues long: DNA repair protein RecO (278 aa).

A compositionally biased stretch (polar residues) spans 1 to 12; it reads MGTNDALTSTED. A disordered region spans residues 1 to 41; that stretch reads MGTNDALTSTEDAVTAGANDAPLPAPPEPPRKARRATSRTS.

The protein belongs to the RecO family.

Functionally, involved in DNA repair and RecF pathway recombination. This Burkholderia orbicola (strain AU 1054) protein is DNA repair protein RecO.